The primary structure comprises 145 residues: D-aminoacyl-tRNA deacylase (145 aa).

The Gly-cisPro motif, important for rejection of L-amino acids signature appears at 137–138; sequence GP.

Belongs to the DTD family. Homodimer.

Its subcellular location is the cytoplasm. It carries out the reaction glycyl-tRNA(Ala) + H2O = tRNA(Ala) + glycine + H(+). The enzyme catalyses a D-aminoacyl-tRNA + H2O = a tRNA + a D-alpha-amino acid + H(+). An aminoacyl-tRNA editing enzyme that deacylates mischarged D-aminoacyl-tRNAs. Also deacylates mischarged glycyl-tRNA(Ala), protecting cells against glycine mischarging by AlaRS. Acts via tRNA-based rather than protein-based catalysis; rejects L-amino acids rather than detecting D-amino acids in the active site. By recycling D-aminoacyl-tRNA to D-amino acids and free tRNA molecules, this enzyme counteracts the toxicity associated with the formation of D-aminoacyl-tRNA entities in vivo and helps enforce protein L-homochirality. This Photobacterium profundum (strain SS9) protein is D-aminoacyl-tRNA deacylase.